The following is a 1046-amino-acid chain: SWI/SNF-related matrix-associated actin-dependent regulator of chromatin subfamily A member 1 (1046 aa).

Positions 27–61 (EQPGPSTFKEEGAAAAATEGTTATEKGEKKEKITS) are disordered. Over residues 39 to 50 (AAAAATEGTTAT) the composition is skewed to low complexity. Residues serine 120 and serine 123 each carry the phosphoserine modification. A Helicase ATP-binding domain is found at 199–364 (ISLYENGVNG…WALLNFLLPD (166 aa)). An ATP-binding site is contributed by 212-219 (DEMGLGKT). Positions 315–318 (DEAH) match the DEAH box motif. One can recognise a Helicase C-terminal domain in the interval 494–645 (ALDKLLARIK…SIVIQQGRLI (152 aa)). Glycyl lysine isopeptide (Lys-Gly) (interchain with G-Cter in SUMO2) cross-links involve residues lysine 654, lysine 720, and lysine 742. Residues 819-840 (AQREEQKKIDGAEPLTPQETEE) form a disordered region. Basic and acidic residues predominate over residues 820–829 (QREEQKKIDG). The region spanning 847 to 899 (QGFTNWTKRDFNQFIKANEKYGRDDIDNIAREVEGKSPEEVMEYSAVFWERCN) is the SANT 1 domain. A Phosphotyrosine modification is found at tyrosine 946. One can recognise an SANT 2 domain in the interval 950-1014 (KGKNYTEEED…QRRCNTLISL (65 aa)). Residues 1003 to 1037 (EFQRRCNTLISLIEKENMEIEERERAEKKKRATKT) are a coiled coil. The segment at 1025–1046 (RERAEKKKRATKTPMVKFSAFS) is disordered.

It belongs to the SNF2/RAD54 helicase family. ISWI subfamily. May form homodimers. Component of the ACF-1 ISWI chromatin remodeling complex at least composed of SMARCA1 and BAZ1A, which regulates the spacing of histone octamers on the DNA template to facilitate access to DNA. Within the complex interacts with BAZ1A; the interaction is direct. Component of the WICH-1 ISWI chromatin remodeling complex at least composed of SMARCA1 and BAZ1B/WSTF. Within the complex interacts with BAZ1B/WSTF. Component of the NoRC-1 ISWI chromatin remodeling complex at least composed of SMARCA1 and BAZ2A/TIP5. Within the complex interacts with BAZ2A/TIP5. Component of the BRF-1 ISWI chromatin remodeling complex at least composed of SMARCA1 and BAZ2B. Within the complex interacts with BAZ2B. Component of the NURF-1 ISWI chromatin remodeling complex (also called the nucleosome-remodeling factor (NURF) complex) at least composed of SMARCA1, BPTF, RBBP4 and RBBP7. Within the complex interacts with BPTF. Within the complex interacts with RBBP4 and RBBP7. Component of the CERF-1 ISWI chromatin remodeling complex (also called the CECR2-containing-remodeling factor (CERF) complex) at least composed of CECR2 and SMARCA1. LUZP1 is detected as part of the CERF-1 complex in embryonic stem cells where it is involved in complex stabilization but is not detected in the complex in the testis. Component of the RSF-1 ISWI chromatin remodeling complex at least composed of SMARCA1 and RSF1. Within the complex interacts with RSF1. Interacts with PRLR. Interacts with ERCC6. Predominantly expressed in cortex, cerebellum, ovaries, testes, uterus and placenta.

It is found in the nucleus. It catalyses the reaction ATP + H2O = ADP + phosphate + H(+). Functionally, ATPase that possesses intrinsic ATP-dependent chromatin-remodeling activity. ATPase activity is substrate-dependent, and is increased when nucleosomes are the substrate, but is also catalytically active when DNA alone is the substrate. Catalytic subunit of ISWI chromatin-remodeling complexes, which form ordered nucleosome arrays on chromatin and facilitate access to DNA during DNA-templated processes such as DNA replication, transcription, and repair. Within the ISWI chromatin-remodeling complexes, slides edge- and center-positioned histone octamers away from their original location on the DNA template. Catalytic activity and histone octamer sliding propensity is regulated and determined by components of the ISWI chromatin-remodeling complexes. The BAZ1A-, BAZ1B-, BAZ2A- and BAZ2B-containing ISWI chromatin-remodeling complexes regulate the spacing of nucleosomes along the chromatin and have the ability to slide mononucleosomes to the center of a DNA template. The CECR2- and RSF1-containing ISWI chromatin-remodeling complexes do not have the ability to slide mononucleosomes to the center of a DNA template. Within the NURF-1 and CERF-1 ISWI chromatin remodeling complexes, nucleosomes are the preferred substrate for its ATPase activity. Within the NURF-1 ISWI chromatin-remodeling complex, binds to the promoters of En1 and En2 to positively regulate their expression and promote brain development. May promote neurite outgrowth. May be involved in the development of luteal cells. Facilitates nucleosome assembly during DNA replication, ensuring replication fork progression and genomic stability by preventing replication stress and nascent DNA gaps. In Mus musculus (Mouse), this protein is SWI/SNF-related matrix-associated actin-dependent regulator of chromatin subfamily A member 1 (Smarca1).